Consider the following 337-residue polypeptide: Zinc finger protein Gfi-1b (337 aa).

The segment at 1 to 20 (MPRSFLVKSKKAHTYHQHRF) is mediates repression of transcription. Residues 1–20 (MPRSFLVKSKKAHTYHQHRF) are SNAG domain. 6 C2H2-type zinc fingers span residues 170–193 (YHCV…RRSH), 199–221 (FACE…TNIH), 227–249 (FECK…LLIH), 255–277 (YPCQ…TYIH), 283–305 (HKCQ…SRKH), and 311–334 (FSCE…ETQH).

As to expression, expressed in erythroid cells of primitive and definitive lineage and bone marrow cells.

It localises to the nucleus. Essential transcriptional regulator necessary for development and differentiation of erythroid and megakaryocytic lineages. Alters histone methylation by recruiting histone methyltransferase to target genes promoters. Plays a role in heterochromatin formation. The protein is Zinc finger protein Gfi-1b (GFI1B) of Gallus gallus (Chicken).